Reading from the N-terminus, the 105-residue chain is Probable guanidinium efflux system subunit GdnD (105 aa).

The next 4 membrane-spanning stretches (helical) occupy residues 1–21 (MLHW…VALM), 32–52 (WVLL…YAME), 59–79 (AYAV…ILFY), and 85–105 (AKRI…KILS).

This sequence belongs to the drug/metabolite transporter (DMT) superfamily. Small multidrug resistance (SMR) (TC 2.A.7.1) family. YkkC/YkkD subfamily. The efflux pump is composed of GdnC and GdnD.

The protein localises to the cell membrane. Functionally, probably involved in guanidinium transport. In vitro, confers resistance to a broad range of toxic compounds such as cationic dyes, neutral and anionic antimicrobials. The polypeptide is Probable guanidinium efflux system subunit GdnD (Bacillus subtilis (strain 168)).